Reading from the N-terminus, the 276-residue chain is Large ribosomal subunit protein uL2c (276 aa).

Disordered stretches follow at residues 1–51 and 224–276; these read MAIR…GIIT and VVMN…RRRK. Composition is skewed to polar residues over residues 7 to 18 and 27 to 37; these read RTYTPSTRNRPI and SNPQKKLTSGQ.

The protein belongs to the universal ribosomal protein uL2 family. Part of the 50S ribosomal subunit.

It localises to the plastid. It is found in the chloroplast. In Cycas taitungensis (Prince sago), this protein is Large ribosomal subunit protein uL2c (rpl2).